The primary structure comprises 1238 residues: Protein MMS22-like (1238 aa).

This sequence belongs to the MMS22 family. MMS22L subfamily. As to quaternary structure, component of the MMS22L-TONSL complex, a complex at least composed of MMS22L and TONSL/NFKBIL2. Interacts with RAD51; interaction is direct. Degraded by the ubiquitin-proteasome system upon replication stress.

It is found in the nucleus. The protein resides in the chromosome. Its function is as follows. Component of the MMS22L-TONSL complex, a complex that promotes homologous recombination-mediated repair of double-strand breaks (DSBs) at stalled or collapsed replication forks. The MMS22L-TONSL complex is required to maintain genome integrity during DNA replication. It mediates the assembly of RAD51 filaments on single-stranded DNA (ssDNA): the MMS22L-TONSL complex is recruited to DSBs following histone replacement by histone chaperones and eviction of the replication protein A complex (RPA/RP-A) from DSBs. Following recruitment to DSBs, the TONSL-MMS22L complex promotes recruitment of RAD51 filaments and subsequent homologous recombination. Within the complex, MMS22L acts by binding ssDNA. This Mus musculus (Mouse) protein is Protein MMS22-like (Mms22l).